The sequence spans 306 residues: Flavin adenine dinucleotide synthase (306 aa).

FAD is bound by residues serine 59, isoleucine 107, glycine 164, 182–185 (DSNW), arginine 190, and arginine 300.

The protein belongs to the PAPS reductase family. FAD1 subfamily.

It localises to the cytoplasm. It catalyses the reaction FMN + ATP + H(+) = FAD + diphosphate. It functions in the pathway cofactor biosynthesis; FAD biosynthesis; FAD from FMN: step 1/1. Functionally, catalyzes the adenylation of flavin mononucleotide (FMN) to form flavin adenine dinucleotide (FAD) coenzyme. The protein is Flavin adenine dinucleotide synthase of Saccharomyces cerevisiae (strain ATCC 204508 / S288c) (Baker's yeast).